A 227-amino-acid polypeptide reads, in one-letter code: Zinc finger protein 511 (227 aa).

3 C2H2-type zinc fingers span residues 80–105 (FTCQ…HMMH), 107–130 (NTCS…LEWH), and 144–169 (YQCL…VRLH). The tract at residues 180-204 (PKTNRGPAMPAAADAATRAPTDDSD) is disordered. Residues 186-198 (PAMPAAADAATRA) show a composition bias toward low complexity.

It belongs to the krueppel C2H2-type zinc-finger protein family.

It localises to the nucleus. In terms of biological role, may be involved in transcriptional regulation. The polypeptide is Zinc finger protein 511 (Znf511) (Mus musculus (Mouse)).